A 436-amino-acid polypeptide reads, in one-letter code: Prenyltransferase nscD (436 aa).

This sequence belongs to the tryptophan dimethylallyltransferase family.

Its pathway is secondary metabolite biosynthesis. Its function is as follows. Prenyltransferase; part of the gene cluster that mediates the biosynthesis of neosartoricin B, a prenylated anthracenone that probably exhibits T-cell antiproliferative activity, suggestive of a physiological role as an immunosuppressive agent. The non-reducing polyketide synthase nscA probably synthesizes and cyclizes the decaketide backbone. The hydrolase nscB then mediates the product release through hydrolysis followed by spontaneous decarboxylation. The prenyltransferase nscD catalyzes the addition of the dimethylallyl group to the aromatic C5. The FAD-dependent monooxygenase nscC is then responsible for the stereospecific hydroxylation at C2. Neosartoricin B can be converted into two additional compounds neosartoricins C and D. Neosartoricin C is a spirocyclic compound that is cyclized through the attack of C3 hydroxyl on C14, followed by dehydration. On the other hand, neosartoricin D is a further cyclized compound in which attack of C2 on C14 in neosartoricin C results in the formation of the acetal-containing dioxabicyclo-octanone ring. Both of these compounds are novel and possibly represent related metabolites of the gene cluster. In Trichophyton rubrum (strain ATCC MYA-4607 / CBS 118892) (Athlete's foot fungus), this protein is Prenyltransferase nscD.